A 186-amino-acid chain; its full sequence is NADH-quinone oxidoreductase subunit B (186 aa).

[4Fe-4S] cluster contacts are provided by cysteine 44, cysteine 45, cysteine 110, and cysteine 139.

It belongs to the complex I 20 kDa subunit family. NDH-1 is composed of 14 different subunits. Subunits NuoB, C, D, E, F, and G constitute the peripheral sector of the complex. Requires [4Fe-4S] cluster as cofactor.

It is found in the cell inner membrane. The catalysed reaction is a quinone + NADH + 5 H(+)(in) = a quinol + NAD(+) + 4 H(+)(out). Its function is as follows. NDH-1 shuttles electrons from NADH, via FMN and iron-sulfur (Fe-S) centers, to quinones in the respiratory chain. The immediate electron acceptor for the enzyme in this species is believed to be ubiquinone. Couples the redox reaction to proton translocation (for every two electrons transferred, four hydrogen ions are translocated across the cytoplasmic membrane), and thus conserves the redox energy in a proton gradient. The chain is NADH-quinone oxidoreductase subunit B from Leptospira borgpetersenii serovar Hardjo-bovis (strain JB197).